Consider the following 756-residue polypeptide: Cellulose synthase catalytic subunit [UDP-forming] (756 aa).

The next 4 helical transmembrane spans lie at 27 to 47 (ASYI…TVTL), 49 to 69 (NNEQ…VGRG), 106 to 126 (GILG…LFLS), and 167 to 187 (LTVL…VYIL). A catalytic subdomain A region spans residues 147–242 (DWPTVDIFIP…YILILDCDHI (96 aa)). Aspartate 189 is an active-site residue. Substrate is bound by residues aspartate 238 and aspartate 240. The interval 319-379 (EAIESIGGFA…GQRMRWARGM (61 aa)) is catalytic subdomain B. Residue aspartate 335 is part of the active site. 5 helical membrane passes run 409–429 (FFFA…LFAG), 432–452 (IIAA…FHSI), 470–490 (VYET…LLFP), 517–537 (NIIF…ELIV), and 551–571 (LLNC…IAVG). Positions 576 to 681 (QVRYNHRVEA…ERDIVRFVFG (106 aa)) constitute a PilZ domain. Positions 721-756 (NSRPKKKPLALPVERREPTTIHSGQTQEGKISRAAS) are disordered. Over residues 740 to 756 (TIHSGQTQEGKISRAAS) the composition is skewed to polar residues.

This sequence belongs to the glycosyltransferase 2 family. It depends on Mg(2+) as a cofactor.

Its subcellular location is the cell inner membrane. The enzyme catalyses [(1-&gt;4)-beta-D-glucosyl](n) + UDP-alpha-D-glucose = [(1-&gt;4)-beta-D-glucosyl](n+1) + UDP + H(+). The protein operates within glycan metabolism; bacterial cellulose biosynthesis. Activated by bis-(3'-5') cyclic diguanylic acid (c-di-GMP). Functionally, catalytic subunit of cellulose synthase. It polymerizes uridine 5'-diphosphate glucose to cellulose. The thick cellulosic mats generated by this enzyme probably provide a specialized protective environment to the bacterium. The protein is Cellulose synthase catalytic subunit [UDP-forming] (bcsA) of Komagataeibacter sucrofermentans (strain ATCC 700178 / DSM 15973 / CECT 7291 / JCM 9730 / LMG 18788 / BPR 2001) (Acetobacter xylinus subsp. sucrofermentans).